The primary structure comprises 1036 residues: Isoleucine--tRNA ligase (1036 aa).

Residues P46–H56 carry the 'HIGH' region motif. The 'KMSKS' region signature appears at K589 to R593. K592 is an ATP binding site.

Belongs to the class-I aminoacyl-tRNA synthetase family. IleS type 2 subfamily. As to quaternary structure, monomer. Requires Zn(2+) as cofactor.

It localises to the cytoplasm. It carries out the reaction tRNA(Ile) + L-isoleucine + ATP = L-isoleucyl-tRNA(Ile) + AMP + diphosphate. Functionally, catalyzes the attachment of isoleucine to tRNA(Ile). As IleRS can inadvertently accommodate and process structurally similar amino acids such as valine, to avoid such errors it has two additional distinct tRNA(Ile)-dependent editing activities. One activity is designated as 'pretransfer' editing and involves the hydrolysis of activated Val-AMP. The other activity is designated 'posttransfer' editing and involves deacylation of mischarged Val-tRNA(Ile). This is Isoleucine--tRNA ligase from Chlamydia trachomatis serovar L2 (strain ATCC VR-902B / DSM 19102 / 434/Bu).